The sequence spans 272 residues: uncharacterized protein (272 aa).

Residues methionine 1–glycine 22 form the signal peptide. Cysteine 23 is lipidated: N-palmitoyl cysteine. Residue cysteine 23 is the site of S-diacylglycerol cysteine attachment.

The protein belongs to the staphylococcal tandem lipoprotein family.

It is found in the cell membrane. This is an uncharacterized protein from Staphylococcus aureus (strain MRSA252).